A 146-amino-acid chain; its full sequence is UPF0260 protein Sama_1927 (146 aa).

The protein belongs to the UPF0260 family.

The chain is UPF0260 protein Sama_1927 from Shewanella amazonensis (strain ATCC BAA-1098 / SB2B).